The chain runs to 323 residues: Aspartate carbamoyltransferase catalytic subunit (323 aa).

The carbamoyl phosphate site is built by Arg-68 and Thr-69. Lys-96 is a binding site for L-aspartate. Arg-118, His-148, and Gln-151 together coordinate carbamoyl phosphate. Arg-181 and Arg-236 together coordinate L-aspartate. Gly-277 and Pro-278 together coordinate carbamoyl phosphate.

It belongs to the aspartate/ornithine carbamoyltransferase superfamily. ATCase family. As to quaternary structure, heterododecamer (2C3:3R2) of six catalytic PyrB chains organized as two trimers (C3), and six regulatory PyrI chains organized as three dimers (R2).

The catalysed reaction is carbamoyl phosphate + L-aspartate = N-carbamoyl-L-aspartate + phosphate + H(+). Its pathway is pyrimidine metabolism; UMP biosynthesis via de novo pathway; (S)-dihydroorotate from bicarbonate: step 2/3. In terms of biological role, catalyzes the condensation of carbamoyl phosphate and aspartate to form carbamoyl aspartate and inorganic phosphate, the committed step in the de novo pyrimidine nucleotide biosynthesis pathway. This is Aspartate carbamoyltransferase catalytic subunit from Verminephrobacter eiseniae (strain EF01-2).